Reading from the N-terminus, the 84-residue chain is Sulfur carrier protein TusA (84 aa).

The active-site Cysteine persulfide intermediate is cysteine 21.

The protein belongs to the sulfur carrier protein TusA family.

It localises to the cytoplasm. Functionally, sulfur carrier protein which probably makes part of a sulfur-relay system. The chain is Sulfur carrier protein TusA from Pseudomonas syringae pv. tomato (strain ATCC BAA-871 / DC3000).